Reading from the N-terminus, the 142-residue chain is Large ribosomal subunit protein uL11 (142 aa).

The protein belongs to the universal ribosomal protein uL11 family. Part of the ribosomal stalk of the 50S ribosomal subunit. Interacts with L10 and the large rRNA to form the base of the stalk. L10 forms an elongated spine to which L12 dimers bind in a sequential fashion forming a multimeric L10(L12)X complex. Post-translationally, one or more lysine residues are methylated.

In terms of biological role, forms part of the ribosomal stalk which helps the ribosome interact with GTP-bound translation factors. In Bradyrhizobium sp. (strain ORS 278), this protein is Large ribosomal subunit protein uL11.